The following is a 429-amino-acid chain: 3-phosphoshikimate 1-carboxyvinyltransferase (429 aa).

The 3-phosphoshikimate site is built by lysine 22, serine 23, and arginine 27. Lysine 22 serves as a coordination point for phosphoenolpyruvate. Phosphoenolpyruvate-binding residues include glycine 93 and arginine 122. The 3-phosphoshikimate site is built by serine 168, serine 169, glutamine 170, serine 196, aspartate 311, and lysine 338. Phosphoenolpyruvate is bound at residue glutamine 170. The active-site Proton acceptor is aspartate 311. Phosphoenolpyruvate-binding residues include arginine 342 and arginine 384.

This sequence belongs to the EPSP synthase family. As to quaternary structure, monomer.

The protein resides in the cytoplasm. The catalysed reaction is 3-phosphoshikimate + phosphoenolpyruvate = 5-O-(1-carboxyvinyl)-3-phosphoshikimate + phosphate. It participates in metabolic intermediate biosynthesis; chorismate biosynthesis. In terms of biological role, catalyzes the transfer of the enolpyruvyl moiety of phosphoenolpyruvate (PEP) to the 5-hydroxyl of shikimate-3-phosphate (S3P) to produce enolpyruvyl shikimate-3-phosphate and inorganic phosphate. This Methanocaldococcus jannaschii (strain ATCC 43067 / DSM 2661 / JAL-1 / JCM 10045 / NBRC 100440) (Methanococcus jannaschii) protein is 3-phosphoshikimate 1-carboxyvinyltransferase.